The primary structure comprises 379 residues: Glutamate 5-kinase (379 aa).

Residue Lys-20 participates in ATP binding. Positions 59, 146, and 158 each coordinate substrate. 220-226 (SGGMYSK) serves as a coordination point for ATP. One can recognise a PUA domain in the interval 285-362 (TGSVVVDDGA…AELTAILGDN (78 aa)).

The protein belongs to the glutamate 5-kinase family.

It localises to the cytoplasm. The enzyme catalyses L-glutamate + ATP = L-glutamyl 5-phosphate + ADP. Its pathway is amino-acid biosynthesis; L-proline biosynthesis; L-glutamate 5-semialdehyde from L-glutamate: step 1/2. Its function is as follows. Catalyzes the transfer of a phosphate group to glutamate to form L-glutamate 5-phosphate. The polypeptide is Glutamate 5-kinase (Oleidesulfovibrio alaskensis (strain ATCC BAA-1058 / DSM 17464 / G20) (Desulfovibrio alaskensis)).